Here is a 70-residue protein sequence, read N- to C-terminus: Large ribosomal subunit protein bL31 (70 aa).

Cysteine 16, cysteine 18, cysteine 37, and cysteine 40 together coordinate Zn(2+).

This sequence belongs to the bacterial ribosomal protein bL31 family. Type A subfamily. In terms of assembly, part of the 50S ribosomal subunit. Requires Zn(2+) as cofactor.

In terms of biological role, binds the 23S rRNA. This is Large ribosomal subunit protein bL31 from Shewanella sp. (strain MR-4).